We begin with the raw amino-acid sequence, 449 residues long: Plasmepsin IV (449 aa).

The Cytoplasmic segment spans residues 1 to 37; sequence MALTVKEEEFSNTLIKNASAFDRLKLGNLKNLKIQKK. Positions 1–121 are excised as a propeptide; that stretch reads MALTVKEEEF…SGYAQKGYLG (121 aa). The helical; Signal-anchor for type II membrane protein transmembrane segment at 38–58 threads the bilayer; it reads LQFLYLILFVLITGVFFFFLI. The Lumenal portion of the chain corresponds to 59-449; the sequence is GNFYSHRKLY…SVGFAVAKNL (391 aa). Residues 137–444 enclose the Peptidase A1 domain; it reads FYGEGQIGTN…DYEKESVGFA (308 aa). Aspartate 155 is an active-site residue. A disulfide bridge connects residues cysteine 168 and cysteine 173. Residue aspartate 335 is part of the active site. Residues cysteine 370 and cysteine 406 are joined by a disulfide bond.

Belongs to the peptidase A1 family. In terms of assembly, component of the hemozoin formation complex (HFC) composed of falcipains FP2A and/or FP2B, plasmepsins PMII, PMIII/HAP and PMIV, heme detoxifying protein HDP and falcilysin FLN. The HFC complex is involved in hemoglobin degradation and detoxification of heme in the food vacuole during the asexual blood stage. Proteolytically cleaved into the soluble active mature form by cysteine proteases in the digestive vacuole of trophozoites. Proteolysis requires an acidic environment. Autoprocessing or transprocessing by other plasmepsins such as PMII may serve as an alternate activation system.

It localises to the membrane. Its subcellular location is the vacuole lumen. It carries out the reaction Hydrolysis of the bonds linking certain hydrophobic residues in hemoglobin or globin. Also cleaves small molecules substrates such as Ala-Leu-Glu-Arg-Thr-Phe-|-Phe(NO2)-Ser-Phe-Pro-Thr.. With respect to regulation, inhibited by KNI derived compounds KNI-10333 and to a lesser extent KNI-10743. In terms of biological role, during the asexual blood stage, catalyzes the cleavage of denatured host hemoglobin (Hb). Digestion of host Hb is an essential step which provides the parasite with amino acids for protein synthesis, and regulates osmolarity. This Plasmodium falciparum (isolate 3D7) protein is Plasmepsin IV.